Consider the following 372-residue polypeptide: Queuine tRNA-ribosyltransferase (372 aa).

The active-site Proton acceptor is the aspartate 90. Substrate contacts are provided by residues 90–94 (DSGGF), aspartate 144, glutamine 193, and glycine 220. An RNA binding region spans residues 251–257 (GVGTPED). Aspartate 270 functions as the Nucleophile in the catalytic mechanism. The segment at 275–279 (TRNAR) is RNA binding; important for wobble base 34 recognition. Zn(2+) is bound by residues cysteine 308, cysteine 310, cysteine 313, and histidine 339.

It belongs to the queuine tRNA-ribosyltransferase family. In terms of assembly, homodimer. Within each dimer, one monomer is responsible for RNA recognition and catalysis, while the other monomer binds to the replacement base PreQ1. It depends on Zn(2+) as a cofactor.

The enzyme catalyses 7-aminomethyl-7-carbaguanine + guanosine(34) in tRNA = 7-aminomethyl-7-carbaguanosine(34) in tRNA + guanine. It participates in tRNA modification; tRNA-queuosine biosynthesis. Functionally, catalyzes the base-exchange of a guanine (G) residue with the queuine precursor 7-aminomethyl-7-deazaguanine (PreQ1) at position 34 (anticodon wobble position) in tRNAs with GU(N) anticodons (tRNA-Asp, -Asn, -His and -Tyr). Catalysis occurs through a double-displacement mechanism. The nucleophile active site attacks the C1' of nucleotide 34 to detach the guanine base from the RNA, forming a covalent enzyme-RNA intermediate. The proton acceptor active site deprotonates the incoming PreQ1, allowing a nucleophilic attack on the C1' of the ribose to form the product. After dissociation, two additional enzymatic reactions on the tRNA convert PreQ1 to queuine (Q), resulting in the hypermodified nucleoside queuosine (7-(((4,5-cis-dihydroxy-2-cyclopenten-1-yl)amino)methyl)-7-deazaguanosine). This chain is Queuine tRNA-ribosyltransferase, found in Sulfurimonas denitrificans (strain ATCC 33889 / DSM 1251) (Thiomicrospira denitrificans (strain ATCC 33889 / DSM 1251)).